A 181-amino-acid polypeptide reads, in one-letter code: Reverse rubrerythrin-1 (181 aa).

The Rubredoxin-like domain occupies 1–35; it reads MKKFKCVVCGYIYTGEDAPEKCPVCGAGKDKFVEV. Positions 6, 9, 22, 25, 69, 102, 132, 165, and 168 each coordinate Fe cation. A Ferritin-like diiron domain is found at 52–181; the sequence is KGVDKEVLEG…FRGLLNRYFK (130 aa).

As to quaternary structure, homodimer. It depends on Fe(3+) as a cofactor.

It catalyses the reaction H2O2 + NADH + H(+) = NAD(+) + 2 H2O. In terms of biological role, functions as the terminal component of an NADH peroxidase (NADH:H(2)O(2) oxidoreductase) when using NADH:rubredoxin oxidoreductase (NROR) and rubredoxin (Rd) as electron transport intermediaries from NADH to revRbr 1. Plays an important role in the oxidative stress defense system in C.acetobutylicum, an obligate anaerobic bacterium. Also exhibits NADH oxidase (NADH:O(2) oxidoreductase) activity in vitro, which is 100-fold lesser than that of FprA1/2 using the same electron transfer components. Therefore, its predominant function is most likely as a scavenger of its preferred substrate, H(2)O(2). This chain is Reverse rubrerythrin-1 (rbr3A), found in Clostridium acetobutylicum (strain ATCC 824 / DSM 792 / JCM 1419 / IAM 19013 / LMG 5710 / NBRC 13948 / NRRL B-527 / VKM B-1787 / 2291 / W).